A 669-amino-acid chain; its full sequence is DNA ligase (669 aa).

NAD(+) contacts are provided by residues 31–35 (DAEYD), 80–81 (SL), and Glu-112. Catalysis depends on Lys-114, which acts as the N6-AMP-lysine intermediate. Arg-135, Glu-172, Lys-289, and Lys-313 together coordinate NAD(+). 4 residues coordinate Zn(2+): Cys-407, Cys-410, Cys-425, and Cys-431. One can recognise a BRCT domain in the interval 591–669 (SVPQPLADKV…EEQLIEILNN (79 aa)).

The protein belongs to the NAD-dependent DNA ligase family. LigA subfamily. Mg(2+) serves as cofactor. Mn(2+) is required as a cofactor.

The enzyme catalyses NAD(+) + (deoxyribonucleotide)n-3'-hydroxyl + 5'-phospho-(deoxyribonucleotide)m = (deoxyribonucleotide)n+m + AMP + beta-nicotinamide D-nucleotide.. DNA ligase that catalyzes the formation of phosphodiester linkages between 5'-phosphoryl and 3'-hydroxyl groups in double-stranded DNA using NAD as a coenzyme and as the energy source for the reaction. It is essential for DNA replication and repair of damaged DNA. This is DNA ligase from Aliivibrio salmonicida (strain LFI1238) (Vibrio salmonicida (strain LFI1238)).